The primary structure comprises 244 residues: Phosphoadenosine 5'-phosphosulfate reductase (244 aa).

The active-site Nucleophile; cysteine thiosulfonate intermediate is Cys239.

This sequence belongs to the PAPS reductase family. CysH subfamily.

It is found in the cytoplasm. The catalysed reaction is [thioredoxin]-disulfide + sulfite + adenosine 3',5'-bisphosphate + 2 H(+) = [thioredoxin]-dithiol + 3'-phosphoadenylyl sulfate. It participates in sulfur metabolism; hydrogen sulfide biosynthesis; sulfite from sulfate: step 3/3. In terms of biological role, catalyzes the formation of sulfite from phosphoadenosine 5'-phosphosulfate (PAPS) using thioredoxin as an electron donor. This Shigella flexneri serotype 5b (strain 8401) protein is Phosphoadenosine 5'-phosphosulfate reductase.